Reading from the N-terminus, the 512-residue chain is Ferrochelatase-2, chloroplastic (512 aa).

Residues Met1–Ser32 are disordered. The N-terminal 83 residues, Met1–Ser83, are a transit peptide targeting the chloroplast. Residues Ser9–Phe21 show a composition bias toward low complexity. Val84 is modified (N-acetylvaline).

The protein belongs to the ferrochelatase family. In terms of tissue distribution, expressed in leaves and flowers.

The protein localises to the plastid. It is found in the chloroplast membrane. The protein resides in the chloroplast thylakoid membrane. It carries out the reaction heme b + 2 H(+) = protoporphyrin IX + Fe(2+). It participates in porphyrin-containing compound metabolism; protoheme biosynthesis; protoheme from protoporphyrin-IX: step 1/1. In terms of biological role, catalyzes the last step of heme biosynthesis by inserting ferrous iron into protoporphyrin IX to produce protoheme. Produces heme for photosynthetic cytochromes, and for proteins involved in abiotic and biotic stress responses. May play a role in the quality control of individual chloroplasts during photo-oxidative stress through regulation of heme biosynthesis. The sequence is that of Ferrochelatase-2, chloroplastic from Arabidopsis thaliana (Mouse-ear cress).